Here is a 566-residue protein sequence, read N- to C-terminus: Phosphatidylinositol 4-kinase gamma 4 (566 aa).

2 consecutive Ubiquitin-like domains span residues 34-111 and 112-190; these read TIMI…SDLQ and VLDV…AKVR. Polar residues predominate over residues 250-263; the sequence is DGLKSGNSPVRSSE. The segment at 250–272 is disordered; that stretch reads DGLKSGNSPVRSSEGTGGAYFMQ. One can recognise a PI3K/PI4K catalytic domain in the interval 255-547; sequence GNSPVRSSEG…AVLPGTSEAA (293 aa). The G-loop stretch occupies residues 261 to 267; it reads SSEGTGG. ATP-binding positions include 262 to 268, K284, and 374 to 377; these read SEGTGGA and QMFT. The tract at residues 407 to 415 is catalytic loop; that stretch reads ANADRHGGN. An activation loop region spans residues 430 to 456; that stretch reads PIDHGYCLPESFEDCTFEWLYWPQARK. Residue D432 participates in ATP binding.

This sequence belongs to the PI3/PI4-kinase family. Type II PI4K subfamily. As to quaternary structure, interacts with RPN10, UFD1 and CDC48 in vitro. Autophosphorylated.

Its subcellular location is the membrane. The enzyme catalyses a 1,2-diacyl-sn-glycero-3-phospho-(1D-myo-inositol) + ATP = a 1,2-diacyl-sn-glycero-3-phospho-(1D-myo-inositol 4-phosphate) + ADP + H(+). Its function is as follows. The phosphorylation of phosphatidylinositol (PI) to PI4P is the first committed step in the generation of phosphatidylinositol 4,5-bisphosphate (PIP2), a precursor of the second messenger inositol 1,4,5-trisphosphate (InsP3). Undergoes autophosphorylation and phosphorylates serine/threonine residues of protein substrates. Phosphorylates RPN10 and UFD1 in vitro. The polypeptide is Phosphatidylinositol 4-kinase gamma 4 (Arabidopsis thaliana (Mouse-ear cress)).